The sequence spans 429 residues: Enolase (429 aa).

Residue Gln-163 participates in (2R)-2-phosphoglycerate binding. Glu-205 acts as the Proton donor in catalysis. Residues Asp-242, Glu-286, and Asp-313 each contribute to the Mg(2+) site. The (2R)-2-phosphoglycerate site is built by Lys-338, Arg-367, Ser-368, and Lys-389. Lys-338 serves as the catalytic Proton acceptor.

Belongs to the enolase family. Mg(2+) serves as cofactor.

It is found in the cytoplasm. It localises to the secreted. Its subcellular location is the cell surface. It carries out the reaction (2R)-2-phosphoglycerate = phosphoenolpyruvate + H2O. Its pathway is carbohydrate degradation; glycolysis; pyruvate from D-glyceraldehyde 3-phosphate: step 4/5. Its function is as follows. Catalyzes the reversible conversion of 2-phosphoglycerate (2-PG) into phosphoenolpyruvate (PEP). It is essential for the degradation of carbohydrates via glycolysis. This is Enolase from Geotalea uraniireducens (strain Rf4) (Geobacter uraniireducens).